We begin with the raw amino-acid sequence, 612 residues long: Sulfite reductase [NADPH] flavoprotein alpha-component (612 aa).

The region spanning 64-202 is the Flavodoxin-like domain; the sequence is VTLISASQTG…QAQQWRQQVV (139 aa). FMN contacts are provided by residues 70 to 75, 117 to 120, and 153 to 162; these read SQTGNA, STQG, and LGDTSYEHFC. Positions 247–461 constitute an FAD-binding FR-type domain; it reads TAPLTAQLSV…IEHNDNFRLP (215 aa). FAD contacts are provided by residues Thr335, Lys369, 399 to 402, 417 to 419, Tyr423, and 432 to 435; these read RLYS, TVG, and GGAS. NADP(+) contacts are provided by residues 532–533, 538–542, and Asp574; these read SR and KIYVQ. Position 612 (Tyr612) interacts with FAD.

The protein belongs to the NADPH-dependent sulphite reductase flavoprotein subunit CysJ family. It in the N-terminal section; belongs to the flavodoxin family. In the C-terminal section; belongs to the flavoprotein pyridine nucleotide cytochrome reductase family. As to quaternary structure, alpha(8)-beta(8). The alpha component is a flavoprotein, the beta component is a hemoprotein. Requires FAD as cofactor. FMN serves as cofactor.

The catalysed reaction is hydrogen sulfide + 3 NADP(+) + 3 H2O = sulfite + 3 NADPH + 4 H(+). It functions in the pathway sulfur metabolism; hydrogen sulfide biosynthesis; hydrogen sulfide from sulfite (NADPH route): step 1/1. In terms of biological role, component of the sulfite reductase complex that catalyzes the 6-electron reduction of sulfite to sulfide. This is one of several activities required for the biosynthesis of L-cysteine from sulfate. The flavoprotein component catalyzes the electron flow from NADPH -&gt; FAD -&gt; FMN to the hemoprotein component. The chain is Sulfite reductase [NADPH] flavoprotein alpha-component from Yersinia pseudotuberculosis serotype O:1b (strain IP 31758).